Here is a 197-residue protein sequence, read N- to C-terminus: Translation initiation factor IF-3 (197 aa).

The protein belongs to the IF-3 family. Monomer.

It localises to the cytoplasm. Functionally, IF-3 binds to the 30S ribosomal subunit and shifts the equilibrium between 70S ribosomes and their 50S and 30S subunits in favor of the free subunits, thus enhancing the availability of 30S subunits on which protein synthesis initiation begins. This chain is Translation initiation factor IF-3, found in Prosthecochloris aestuarii (strain DSM 271 / SK 413).